We begin with the raw amino-acid sequence, 622 residues long: Pheromone-regulated protein PRM7 (622 aa).

3 disordered regions span residues 1–35, 47–200, and 374–405; these read MYRTRSSDEVATLTDPTSSSDVATSADPTSSSAVT, STSV…TISA, and LTPVDSASSSRSSATSIIKPNMPVSSNDSKTQ. Residues 14 to 35 show a composition bias toward polar residues; sequence TDPTSSSDVATSADPTSSSAVT. 2 stretches are compositionally biased toward low complexity: residues 47–199 and 379–389; these read STSV…VTIS and SASSSRSSATS. Over residues 396–405 the composition is skewed to polar residues; sequence PVSSNDSKTQ.

The polypeptide is Pheromone-regulated protein PRM7 (PRM7) (Saccharomyces cerevisiae (strain YJM789) (Baker's yeast)).